The following is a 271-amino-acid chain: Acyl-[acyl-carrier-protein]--UDP-N-acetylglucosamine O-acyltransferase (271 aa).

It belongs to the transferase hexapeptide repeat family. LpxA subfamily. In terms of assembly, homotrimer.

It localises to the cytoplasm. The enzyme catalyses a (3R)-hydroxyacyl-[ACP] + UDP-N-acetyl-alpha-D-glucosamine = a UDP-3-O-[(3R)-3-hydroxyacyl]-N-acetyl-alpha-D-glucosamine + holo-[ACP]. It participates in glycolipid biosynthesis; lipid IV(A) biosynthesis; lipid IV(A) from (3R)-3-hydroxytetradecanoyl-[acyl-carrier-protein] and UDP-N-acetyl-alpha-D-glucosamine: step 1/6. Involved in the biosynthesis of lipid A, a phosphorylated glycolipid that anchors the lipopolysaccharide to the outer membrane of the cell. The chain is Acyl-[acyl-carrier-protein]--UDP-N-acetylglucosamine O-acyltransferase from Rhizobium rhizogenes (strain K84 / ATCC BAA-868) (Agrobacterium radiobacter).